The chain runs to 493 residues: Protein nucleotidyltransferase YdiU (493 aa).

8 residues coordinate ATP: Gly94, Gly96, Arg97, Lys117, Asp129, Gly130, Arg180, and Arg187. Catalysis depends on Asp256, which acts as the Proton acceptor. Mg(2+) is bound by residues Asn257 and Asp266. An ATP-binding site is contributed by Asp266.

This sequence belongs to the SELO family. The cofactor is Mg(2+). Mn(2+) serves as cofactor.

The enzyme catalyses L-seryl-[protein] + ATP = 3-O-(5'-adenylyl)-L-seryl-[protein] + diphosphate. It carries out the reaction L-threonyl-[protein] + ATP = 3-O-(5'-adenylyl)-L-threonyl-[protein] + diphosphate. It catalyses the reaction L-tyrosyl-[protein] + ATP = O-(5'-adenylyl)-L-tyrosyl-[protein] + diphosphate. The catalysed reaction is L-histidyl-[protein] + UTP = N(tele)-(5'-uridylyl)-L-histidyl-[protein] + diphosphate. The enzyme catalyses L-seryl-[protein] + UTP = O-(5'-uridylyl)-L-seryl-[protein] + diphosphate. It carries out the reaction L-tyrosyl-[protein] + UTP = O-(5'-uridylyl)-L-tyrosyl-[protein] + diphosphate. In terms of biological role, nucleotidyltransferase involved in the post-translational modification of proteins. It can catalyze the addition of adenosine monophosphate (AMP) or uridine monophosphate (UMP) to a protein, resulting in modifications known as AMPylation and UMPylation. In Hahella chejuensis (strain KCTC 2396), this protein is Protein nucleotidyltransferase YdiU.